Reading from the N-terminus, the 208-residue chain is Ribosomal RNA large subunit methyltransferase E (208 aa).

Positions 63, 65, 83, 99, and 124 each coordinate S-adenosyl-L-methionine. K164 (proton acceptor) is an active-site residue.

The protein belongs to the class I-like SAM-binding methyltransferase superfamily. RNA methyltransferase RlmE family.

The protein resides in the cytoplasm. It carries out the reaction uridine(2552) in 23S rRNA + S-adenosyl-L-methionine = 2'-O-methyluridine(2552) in 23S rRNA + S-adenosyl-L-homocysteine + H(+). Its function is as follows. Specifically methylates the uridine in position 2552 of 23S rRNA at the 2'-O position of the ribose in the fully assembled 50S ribosomal subunit. This is Ribosomal RNA large subunit methyltransferase E from Salmonella choleraesuis (strain SC-B67).